Here is a 457-residue protein sequence, read N- to C-terminus: MALWGGRFTQAADQRFKQFNDSLRFDYRLAEQDIVGSVAWSKALVTVGVLTAEEQAQLEEALNVLLEDVRARPQQILESDAEDIHSWVEGKLIDKVGQLGKKLHTGRSRNDQVATDLKLWCKDTVSELLTANRQLQSALVETAQNNQDAVMPGYTHLQRAQPVTFAHWCLAYVEMLARDESRLQDALKRLDVSPLGCGALAGTAYEIDREQLAGWLGFASATRNSLDSVSDRDHVLELLSAAAIGMVHLSRFAEDLIFFNTGEAGFVELSDRVTSGSSLMPQKKNPDALELIRGKCGRVQGALTGMMMTLKGLPLAYNKDMQEDKEGLFDALDTWLDCLHMAALVLDGIQVKRPRCQEAAQQGYANATELADYLVAKGVPFREAHHIVGEAVVEAIRQGKPLEDLPLDELQKFSPVIDEDVYPILSLQSCLDKRAAKGGVSPQQVAQAIAFAQARLE.

Belongs to the lyase 1 family. Argininosuccinate lyase subfamily.

Its subcellular location is the cytoplasm. It catalyses the reaction 2-(N(omega)-L-arginino)succinate = fumarate + L-arginine. It functions in the pathway amino-acid biosynthesis; L-arginine biosynthesis; L-arginine from L-ornithine and carbamoyl phosphate: step 3/3. This Escherichia coli O139:H28 (strain E24377A / ETEC) protein is Argininosuccinate lyase.